Reading from the N-terminus, the 659-residue chain is Checkpoint protein RAD24 (659 aa).

The interval 24-54 is disordered; the sequence is TKWSSSRPTSPVRKARSTENDFLSKQDTSSI. An ATP-binding site is contributed by 109–116; sequence GPSGCSKS. A compositionally biased stretch (acidic residues) spans 596–612; that stretch reads EDEETSFNDDPIVDSDS. Residues 596-659 are disordered; the sequence is EDEETSFNDD…SLSDSDLEIL (64 aa). Phosphoserine occurs at positions 652 and 654.

This sequence belongs to the rad17/RAD24 family. As to quaternary structure, component of the RAD24-RFC complex which consists of RAD14, RFC2, RFC3, RFC4 and RFC5 and associates with the checkpoint clamp DDC1:MEC3:RAD17 complex. RAD24 interacts with ECO1.

Its subcellular location is the nucleus. Its function is as follows. Participates in checkpoint pathways arrest of the cell cycle, a mechanism that allows the DNA repair pathways to act to restore the integrity of the DNA prior to DNA synthesis or separation of the replicated chromosomes. Regulates the DNA damage checkpoint pathway throughout the cell cycle, when associated with RCF5. Component of the RFC-like RAD24-RFC complex which loads the checkpoint clamp DDC1:MEC3:RAD17 complex and is involved in DNA repair pathways. During a clamp loading circle, the RFC:clamp complex binds to DNA and the recognition of the double-stranded/single-stranded junction stimulates ATP hydrolysis by RFC. The complex presumably provides bipartite ATP sites in which one subunit supplies a catalytic site for hydrolysis of ATP bound to the neighboring subunit. Dissociation of RFC from the clamp leaves the clamp encircling DNA. The polypeptide is Checkpoint protein RAD24 (RAD24) (Saccharomyces cerevisiae (strain ATCC 204508 / S288c) (Baker's yeast)).